The sequence spans 536 residues: Nuclear hormone receptor family member nhr-7 (536 aa).

The nuclear receptor DNA-binding region spans 6 to 82 (NRICAVCGDT…VGMNPDYVRP (77 aa)). 2 consecutive NR C4-type zinc fingers follow at residues 9–29 (CAVCGDTPAKIHYGVLACFGC) and 46–70 (CRFEKNCEVTKFERNACRYCRFRKC). Residues 155–378 (ADRSLARKTG…PFHKILTDII (224 aa)) enclose the NR LBD domain. A disordered region spans residues 427 to 465 (SPCQISAPPPPQQQYTDYSQMPSTSSYPANSSPFQSPYR). Polar residues predominate over residues 439–465 (QQYTDYSQMPSTSSYPANSSPFQSPYR).

The protein belongs to the nuclear hormone receptor family.

Its subcellular location is the nucleus. Functionally, orphan nuclear receptor. The chain is Nuclear hormone receptor family member nhr-7 (nhr-7) from Caenorhabditis elegans.